We begin with the raw amino-acid sequence, 174 residues long: Adenine phosphoribosyltransferase (174 aa).

The protein belongs to the purine/pyrimidine phosphoribosyltransferase family. In terms of assembly, homodimer.

It localises to the cytoplasm. The catalysed reaction is AMP + diphosphate = 5-phospho-alpha-D-ribose 1-diphosphate + adenine. It functions in the pathway purine metabolism; AMP biosynthesis via salvage pathway; AMP from adenine: step 1/1. In terms of biological role, catalyzes a salvage reaction resulting in the formation of AMP, that is energically less costly than de novo synthesis. The chain is Adenine phosphoribosyltransferase from Nitrosomonas europaea (strain ATCC 19718 / CIP 103999 / KCTC 2705 / NBRC 14298).